The primary structure comprises 892 residues: Alanine--tRNA ligase (892 aa).

The Zn(2+) site is built by H596, H600, C700, and H704.

Belongs to the class-II aminoacyl-tRNA synthetase family. Zn(2+) serves as cofactor.

It is found in the cytoplasm. The enzyme catalyses tRNA(Ala) + L-alanine + ATP = L-alanyl-tRNA(Ala) + AMP + diphosphate. Catalyzes the attachment of alanine to tRNA(Ala) in a two-step reaction: alanine is first activated by ATP to form Ala-AMP and then transferred to the acceptor end of tRNA(Ala). Also edits incorrectly charged Ser-tRNA(Ala) and Gly-tRNA(Ala) via its editing domain. This is Alanine--tRNA ligase from Methanococcus maripaludis (strain C6 / ATCC BAA-1332).